Consider the following 1036-residue polypeptide: Multiple C2 domain and transmembrane region protein 2 (1036 aa).

One can recognise a C2 1 domain in the interval 1–110 (MRNTTKLVVH…YKDDQVYQRF (110 aa)). 2 disordered regions span residues 137 to 204 (DQTF…PVQK) and 225 to 246 (RENP…HPQN). Residues 146–155 (PYTSPTQASA) are compositionally biased toward polar residues. The segment covering 158-168 (TEEDTADSETE) has biased composition (acidic residues). A compositionally biased stretch (basic and acidic residues) spans 190-204 (VEGKKSEEVKEPVQK). C2 domains follow at residues 277 to 399 (PNAG…PQWY), 440 to 563 (VHGE…SRWF), and 607 to 734 (YISD…THSF). Aspartate 316, aspartate 364, glutamate 366, and aspartate 372 together coordinate Ca(2+). Helical transmembrane passes span 871-891 (FILV…MFFI) and 979-999 (LFIL…FKAI).

The protein belongs to the MCTP family. Ca(2+) is required as a cofactor. In terms of tissue distribution, expressed in the vascular tissues of roots and rosette leaves. Accumulates in roots meristems. Observed in flowers.

It localises to the cell membrane. Its function is as follows. May function as a signaling molecule by regulating the trafficking of other regulators. This is Multiple C2 domain and transmembrane region protein 2 from Arabidopsis thaliana (Mouse-ear cress).